A 51-amino-acid chain; its full sequence is Insulin (51 aa).

3 cysteine pairs are disulfide-bonded: cysteine 7–cysteine 37, cysteine 19–cysteine 50, and cysteine 36–cysteine 41.

This sequence belongs to the insulin family. As to quaternary structure, heterodimer of a B chain and an A chain linked by two disulfide bonds.

It localises to the secreted. Insulin decreases blood glucose concentration. It increases cell permeability to monosaccharides, amino acids and fatty acids. It accelerates glycolysis, the pentose phosphate cycle, and glycogen synthesis in liver. The sequence is that of Insulin (INS) from Ptyas dhumnades (Big-eyed ratsnake).